The sequence spans 272 residues: 3-deoxy-manno-octulosonate cytidylyltransferase (272 aa).

This sequence belongs to the KdsB family.

Its subcellular location is the cytoplasm. It catalyses the reaction 3-deoxy-alpha-D-manno-oct-2-ulosonate + CTP = CMP-3-deoxy-beta-D-manno-octulosonate + diphosphate. It participates in nucleotide-sugar biosynthesis; CMP-3-deoxy-D-manno-octulosonate biosynthesis; CMP-3-deoxy-D-manno-octulosonate from 3-deoxy-D-manno-octulosonate and CTP: step 1/1. The protein operates within bacterial outer membrane biogenesis; lipopolysaccharide biosynthesis. Activates KDO (a required 8-carbon sugar) for incorporation into bacterial lipopolysaccharide in Gram-negative bacteria. The polypeptide is 3-deoxy-manno-octulosonate cytidylyltransferase (Verminephrobacter eiseniae (strain EF01-2)).